Consider the following 312-residue polypeptide: Protein ABIL2 (312 aa).

The disordered stretch occupies residues Thr173–Lys287. Residues Arg183–Ser199 are compositionally biased toward low complexity. A compositionally biased stretch (polar residues) spans Ser230–Ile251. Residues Ala269–Glu279 are compositionally biased toward basic and acidic residues.

Belongs to the ABI family. In terms of assembly, binds SCAR.

It localises to the cytoplasm. Its subcellular location is the cytoskeleton. Its function is as follows. Involved in regulation of actin and microtubule organization. Part of a WAVE complex that activates the Arp2/3 complex. The polypeptide is Protein ABIL2 (ABIL2) (Arabidopsis thaliana (Mouse-ear cress)).